The following is a 124-amino-acid chain: UPF0292 protein AF_0905 (124 aa).

The Toprim domain maps to 21 to 98; the sequence is GWVVVVEGKK…IPDVEIKRKI (78 aa). 3 residues coordinate Mg(2+): E27, D67, and D69.

This sequence belongs to the UPF0292 family. Mg(2+) is required as a cofactor.

The polypeptide is UPF0292 protein AF_0905 (Archaeoglobus fulgidus (strain ATCC 49558 / DSM 4304 / JCM 9628 / NBRC 100126 / VC-16)).